A 366-amino-acid chain; its full sequence is MTKITLSDLPLREELRGEHAYGAPQLNVDIRLNTNENPYPPSEALVADLVATVDKIATELNRYPERDAVELRDELAAYITKQTGVAVTRDNLWAANGSNEILQQLLQAFGGPGRTALGFQPSYSMHPILAKGTHTEFIAVSRGADFRIDMDVALEEIRAKQPDIVFVTTPNNPTGDVTSLDDIERIINVAPGIVIVDEAYAEFSPSPSATTLLEKYPTKLVVSRTMSKAFDFAGGRLGYFVANPAFIDAVMLVRLPYHLSALSQAAAIVALRHSADTLGTVEKLSVERVRVAARLEELGYAVVPSESNFVFFGDFSDQHAAWQAFLDRGVLIRDVGIAGHLRTTIGVPEENDAFLDAAAEIIKLNL.

Position 228 is an N6-(pyridoxal phosphate)lysine (Lys228).

It belongs to the class-II pyridoxal-phosphate-dependent aminotransferase family. Histidinol-phosphate aminotransferase subfamily. As to quaternary structure, homodimer. The cofactor is pyridoxal 5'-phosphate.

It carries out the reaction L-histidinol phosphate + 2-oxoglutarate = 3-(imidazol-4-yl)-2-oxopropyl phosphate + L-glutamate. It functions in the pathway amino-acid biosynthesis; L-histidine biosynthesis; L-histidine from 5-phospho-alpha-D-ribose 1-diphosphate: step 7/9. This chain is Histidinol-phosphate aminotransferase, found in Corynebacterium glutamicum (strain R).